Reading from the N-terminus, the 128-residue chain is UPF0102 protein Acry_2261 (128 aa).

It belongs to the UPF0102 family.

This chain is UPF0102 protein Acry_2261, found in Acidiphilium cryptum (strain JF-5).